The sequence spans 308 residues: HPr kinase/phosphorylase (308 aa).

Active-site residues include H138 and K159. Residue 153 to 160 (GESGLGKS) coordinates ATP. S160 serves as a coordination point for Mg(2+). D177 acts as the Proton acceptor; for phosphorylation activity. Proton donor; for dephosphorylation activity in catalysis. An important for the catalytic mechanism of both phosphorylation and dephosphorylation region spans residues 201 to 210 (LEVRGLGLLD). Residue E202 coordinates Mg(2+). R243 is an active-site residue. The tract at residues 264–269 (QVAAGR) is important for the catalytic mechanism of dephosphorylation.

The protein belongs to the HPrK/P family. In terms of assembly, homohexamer. Requires Mg(2+) as cofactor.

It carries out the reaction [HPr protein]-L-serine + ATP = [HPr protein]-O-phospho-L-serine + ADP + H(+). The catalysed reaction is [HPr protein]-O-phospho-L-serine + phosphate + H(+) = [HPr protein]-L-serine + diphosphate. Catalyzes the ATP- as well as the pyrophosphate-dependent phosphorylation of a specific serine residue in HPr, a phosphocarrier protein of the phosphoenolpyruvate-dependent sugar phosphotransferase system (PTS). HprK/P also catalyzes the pyrophosphate-producing, inorganic phosphate-dependent dephosphorylation (phosphorolysis) of seryl-phosphorylated HPr (P-Ser-HPr). This chain is HPr kinase/phosphorylase, found in Bordetella petrii (strain ATCC BAA-461 / DSM 12804 / CCUG 43448).